The primary structure comprises 112 residues: UPF0342 protein SP_1372 (112 aa).

The protein belongs to the UPF0342 family.

The chain is UPF0342 protein SP_1372 from Streptococcus pneumoniae serotype 4 (strain ATCC BAA-334 / TIGR4).